We begin with the raw amino-acid sequence, 307 residues long: UDP-N-acetylenolpyruvoylglucosamine reductase (307 aa).

Residues 34 to 197 (VGGNAEALFR…LSASLKGRPG (164 aa)) enclose the FAD-binding PCMH-type domain. Arginine 177 is an active-site residue. The active-site Proton donor is the serine 226. Glutamate 296 is an active-site residue.

It belongs to the MurB family. The cofactor is FAD.

Its subcellular location is the cytoplasm. The enzyme catalyses UDP-N-acetyl-alpha-D-muramate + NADP(+) = UDP-N-acetyl-3-O-(1-carboxyvinyl)-alpha-D-glucosamine + NADPH + H(+). It functions in the pathway cell wall biogenesis; peptidoglycan biosynthesis. Functionally, cell wall formation. The polypeptide is UDP-N-acetylenolpyruvoylglucosamine reductase (Paramagnetospirillum magneticum (strain ATCC 700264 / AMB-1) (Magnetospirillum magneticum)).